The primary structure comprises 497 residues: L-arabinose isomerase (497 aa).

Mn(2+) contacts are provided by E306, E331, H348, and H447.

It belongs to the arabinose isomerase family. Mn(2+) serves as cofactor.

The enzyme catalyses beta-L-arabinopyranose = L-ribulose. The protein operates within carbohydrate degradation; L-arabinose degradation via L-ribulose; D-xylulose 5-phosphate from L-arabinose (bacterial route): step 1/3. Functionally, catalyzes the conversion of L-arabinose to L-ribulose. This chain is L-arabinose isomerase, found in Halalkalibacterium halodurans (strain ATCC BAA-125 / DSM 18197 / FERM 7344 / JCM 9153 / C-125) (Bacillus halodurans).